A 1393-amino-acid polypeptide reads, in one-letter code: DNA-directed RNA polymerase subunit beta' (1393 aa).

4 residues coordinate Zn(2+): Cys-71, Cys-73, Cys-86, and Cys-89. Mg(2+) is bound by residues Asp-462, Asp-464, and Asp-466. Residues Cys-811, Cys-885, Cys-892, and Cys-895 each coordinate Zn(2+).

It belongs to the RNA polymerase beta' chain family. In terms of assembly, the RNAP catalytic core consists of 2 alpha, 1 beta, 1 beta' and 1 omega subunit. When a sigma factor is associated with the core the holoenzyme is formed, which can initiate transcription. Mg(2+) serves as cofactor. It depends on Zn(2+) as a cofactor.

The catalysed reaction is RNA(n) + a ribonucleoside 5'-triphosphate = RNA(n+1) + diphosphate. Its function is as follows. DNA-dependent RNA polymerase catalyzes the transcription of DNA into RNA using the four ribonucleoside triphosphates as substrates. The protein is DNA-directed RNA polymerase subunit beta' of Azorhizobium caulinodans (strain ATCC 43989 / DSM 5975 / JCM 20966 / LMG 6465 / NBRC 14845 / NCIMB 13405 / ORS 571).